The sequence spans 862 residues: DNA topoisomerase 3-beta-1 (862 aa).

The 151-residue stretch at 3 to 153 (TVLMVAEKPS…EKTVFRARFS (151 aa)) folds into the Toprim domain. In terms of domain architecture, Topo IA-type catalytic spans 171-593 (DHNEALSVDA…HTLDIFKRKF (423 aa)). The active-site O-(5'-phospho-DNA)-tyrosine intermediate is the Tyr-336. The segment at 820–855 (HPMHRGGPGRRQGRGRGRGRRPPGKPNPRRPKDKMS) is disordered. Over residues 821–851 (PMHRGGPGRRQGRGRGRGRRPPGKPNPRRPK) the composition is skewed to basic residues.

Belongs to the type IA topoisomerase family. In terms of tissue distribution, highly expressed in testis.

The catalysed reaction is ATP-independent breakage of single-stranded DNA, followed by passage and rejoining.. Releases the supercoiling and torsional tension of DNA introduced during the DNA replication and transcription by transiently cleaving and rejoining one strand of the DNA duplex. Introduces a single-strand break via transesterification at a target site in duplex DNA. The scissile phosphodiester is attacked by the catalytic tyrosine of the enzyme, resulting in the formation of a DNA-(5'-phosphotyrosyl)-enzyme intermediate and the expulsion of a 3'-OH DNA strand. The free DNA strand than undergoes passage around the unbroken strand thus removing DNA supercoils. Finally, in the religation step, the DNA 3'-OH attacks the covalent intermediate to expel the active-site tyrosine and restore the DNA phosphodiester backbone. Possesses negatively supercoiled DNA relaxing activity. The protein is DNA topoisomerase 3-beta-1 (Top3b) of Mus musculus (Mouse).